Reading from the N-terminus, the 288-residue chain is 4-hydroxy-3-methylbut-2-enyl diphosphate reductase (288 aa).

C13 is a binding site for [4Fe-4S] cluster. (2E)-4-hydroxy-3-methylbut-2-enyl diphosphate contacts are provided by H41 and H75. Dimethylallyl diphosphate is bound by residues H41 and H75. H41 and H75 together coordinate isopentenyl diphosphate. C97 contributes to the [4Fe-4S] cluster binding site. H130 provides a ligand contact to (2E)-4-hydroxy-3-methylbut-2-enyl diphosphate. H130 is a binding site for dimethylallyl diphosphate. Position 130 (H130) interacts with isopentenyl diphosphate. Residue E132 is the Proton donor of the active site. Position 168 (T168) interacts with (2E)-4-hydroxy-3-methylbut-2-enyl diphosphate. A [4Fe-4S] cluster-binding site is contributed by C199. 4 residues coordinate (2E)-4-hydroxy-3-methylbut-2-enyl diphosphate: S227, S228, N229, and S271. Dimethylallyl diphosphate contacts are provided by S227, S228, N229, and S271. Residues S227, S228, N229, and S271 each contribute to the isopentenyl diphosphate site.

The protein belongs to the IspH family. Requires [4Fe-4S] cluster as cofactor.

The enzyme catalyses isopentenyl diphosphate + 2 oxidized [2Fe-2S]-[ferredoxin] + H2O = (2E)-4-hydroxy-3-methylbut-2-enyl diphosphate + 2 reduced [2Fe-2S]-[ferredoxin] + 2 H(+). It catalyses the reaction dimethylallyl diphosphate + 2 oxidized [2Fe-2S]-[ferredoxin] + H2O = (2E)-4-hydroxy-3-methylbut-2-enyl diphosphate + 2 reduced [2Fe-2S]-[ferredoxin] + 2 H(+). Its pathway is isoprenoid biosynthesis; dimethylallyl diphosphate biosynthesis; dimethylallyl diphosphate from (2E)-4-hydroxy-3-methylbutenyl diphosphate: step 1/1. It participates in isoprenoid biosynthesis; isopentenyl diphosphate biosynthesis via DXP pathway; isopentenyl diphosphate from 1-deoxy-D-xylulose 5-phosphate: step 6/6. Functionally, catalyzes the conversion of 1-hydroxy-2-methyl-2-(E)-butenyl 4-diphosphate (HMBPP) into a mixture of isopentenyl diphosphate (IPP) and dimethylallyl diphosphate (DMAPP). Acts in the terminal step of the DOXP/MEP pathway for isoprenoid precursor biosynthesis. This chain is 4-hydroxy-3-methylbut-2-enyl diphosphate reductase, found in Phocaeicola vulgatus (strain ATCC 8482 / DSM 1447 / JCM 5826 / CCUG 4940 / NBRC 14291 / NCTC 11154) (Bacteroides vulgatus).